The following is a 1435-amino-acid chain: Dicer-like protein 2 (1435 aa).

Residues 54–234 (MLSESLRQNI…LEVLEINLNA (181 aa)) form the Helicase ATP-binding domain. 67 to 74 (MDTGSGKT) lines the ATP pocket. Residues 175–178 (DEAH) carry the DEAH box motif. The Helicase C-terminal domain occupies 400–564 (KLIDFLVLEH…ENKRALEHIQ (165 aa)). The 94-residue stretch at 591-684 (ARNHLSHFCG…MPAHHHIDDE (94 aa)) folds into the Dicer dsRNA-binding fold domain. RNase III domains follow at residues 956–1099 (ANEL…IDGG) and 1141–1323 (LSEI…IDSQ). 3 residues coordinate Mg(2+): glutamate 1178, aspartate 1309, and glutamate 1312.

Belongs to the helicase family. Dicer subfamily. It depends on Mg(2+) as a cofactor. Requires Mn(2+) as cofactor.

Its function is as follows. Dicer-like endonuclease involved in cleaving double-stranded RNA in the RNA interference (RNAi) pathway. Produces 21 to 25 bp dsRNAs (siRNAs) which target the selective destruction of homologous RNAs leading to sequence-specific suppression of gene expression, called post-transcriptional gene silencing (PTGS). Part of a broad host defense response against viral infection and transposons. The chain is Dicer-like protein 2 (DCL2) from Coccidioides immitis (strain RS) (Valley fever fungus).